We begin with the raw amino-acid sequence, 237 residues long: Neural retina-specific leucine zipper protein (237 aa).

Residues Lys20 and Lys24 each participate in a glycyl lysine isopeptide (Lys-Gly) (interchain with G-Cter in SUMO) cross-link. A disordered region spans residues 26 to 64 (EPSEGRSGVPTASLGSTPYSSVPPSPTFSEPGMVGGGEA). Residues 30-93 (GRSGVPTASL…SDEVLGLSPD (64 aa)) are minimal transactivation domain (MTD). A basic motif region spans residues 159–185 (RLKQRRRTLKNRGYAQACRSKRLQQRR). Residues 159–222 (RLKQRRRTLK…DLYKARCDRL (64 aa)) enclose the bZIP domain. A leucine-zipper region spans residues 187–208 (LEAERARLAAQLDALRAEVARL).

Belongs to the bZIP family. In terms of assembly, interacts with FIZ1; this interaction represses transactivation. Interacts (via the leucine-zipper domain) with CRX. Post-translationally, disumoylated at Lys-20. Sumoylation modulates the transcriptional activity of NRL on RHO and NR2E3 promoters, and is required for normal rod differentiation. In terms of processing, phosphorylated. In terms of tissue distribution, expressed in the retina (at protein level).

It localises to the cytoplasm. Its subcellular location is the nucleus. In terms of biological role, acts as a transcriptional activator which regulates the expression of several rod-specific genes, including RHO and PDE6B. Also functions as a transcriptional coactivator, stimulating transcription mediated by the transcription factor CRX and NR2E3. Binds to the rhodopsin promoter in a sequence-specific manner. This Mus musculus (Mouse) protein is Neural retina-specific leucine zipper protein (Nrl).